The sequence spans 132 residues: Small ribosomal subunit protein uS8 (132 aa).

This sequence belongs to the universal ribosomal protein uS8 family. As to quaternary structure, part of the 30S ribosomal subunit. Contacts proteins S5 and S12.

One of the primary rRNA binding proteins, it binds directly to 16S rRNA central domain where it helps coordinate assembly of the platform of the 30S subunit. In Clavibacter michiganensis subsp. michiganensis (strain NCPPB 382), this protein is Small ribosomal subunit protein uS8.